We begin with the raw amino-acid sequence, 424 residues long: Double homeobox protein 4-like protein 2 (424 aa).

Residues 1 to 10 (MALPTPSDST) are compositionally biased toward polar residues. Disordered stretches follow at residues 1–24 (MALP…RRRL), 72–102 (SRQL…TAVT), 148–167 (RHPG…CSAA), 218–362 (LQPS…LQEP), and 388–414 (QPLL…PLSE). 2 DNA-binding regions (homeobox) span residues 19 to 78 (GRRR…LRQH) and 94 to 153 (GRRK…PGQG). Over residues 265–274 (KSREDRDPQR) the composition is skewed to basic and acidic residues. Composition is skewed to low complexity over residues 278–302 (PGPC…LAPP) and 319–329 (AGAAWEPQAGA).

The protein resides in the nucleus. Functionally, may be involved in transcriptional regulation. This Homo sapiens (Human) protein is Double homeobox protein 4-like protein 2 (DUX4L2).